Here is a 522-residue protein sequence, read N- to C-terminus: Peptide chain release factor 3 (522 aa).

Residues 10–277 (ASRKTFAIIS…TFVDFAPSPS (268 aa)) form the tr-type G domain. Residues 19–26 (SHPDAGKT), 87–91 (DTPGH), and 141–144 (NKMD) each bind GTP.

It belongs to the TRAFAC class translation factor GTPase superfamily. Classic translation factor GTPase family. PrfC subfamily.

The protein resides in the cytoplasm. Increases the formation of ribosomal termination complexes and stimulates activities of RF-1 and RF-2. It binds guanine nucleotides and has strong preference for UGA stop codons. It may interact directly with the ribosome. The stimulation of RF-1 and RF-2 is significantly reduced by GTP and GDP, but not by GMP. This Listeria monocytogenes serotype 4b (strain F2365) protein is Peptide chain release factor 3.